Consider the following 333-residue polypeptide: Cytochrome f (333 aa).

The first 37 residues, 1–37 (MRNSCKKARRTRPLKATIQALLVAIATMTFFFTSDIA), serve as a signal peptide directing secretion. Residues 38 to 298 (LPQSAAAYPF…TEIVLQDPNR (261 aa)) are Cytoplasmic-facing. The heme site is built by Tyr-45, Cys-66, Cys-69, and His-70. A helical transmembrane segment spans residues 299-319 (VKWMIAFICLVMLAQLMLILK). Topologically, residues 320-333 (KKQVEKVQAAEMNF) are lumenal, thylakoid.

This sequence belongs to the cytochrome f family. As to quaternary structure, the 4 large subunits of the cytochrome b6-f complex are cytochrome b6, subunit IV (17 kDa polypeptide, PetD), cytochrome f and the Rieske protein, while the 4 small subunits are PetG, PetL, PetM and PetN. The complex functions as a dimer. Heme serves as cofactor.

It is found in the cellular thylakoid membrane. In terms of biological role, component of the cytochrome b6-f complex, which mediates electron transfer between photosystem II (PSII) and photosystem I (PSI), cyclic electron flow around PSI, and state transitions. This Mastigocladus laminosus (Fischerella sp.) protein is Cytochrome f (petA).